Here is an 820-residue protein sequence, read N- to C-terminus: Probable ATP-dependent RNA helicase DDX23 (820 aa).

A compositionally biased stretch (basic and acidic residues) spans 1–42; the sequence is MAGELADKKDRDASPSKEERKRSRTPDRERDRDRDRKSSPSK. The tract at residues 1 to 244 is disordered; it reads MAGELADKKD…QKIREEKDKS (244 aa). S14 and S16 each carry phosphoserine. The segment covering 43–65 has biased composition (basic residues); that stretch reads DRKRHRSRDRRRGGSRSRSRSRS. The span at 66–105 shows a compositional bias: basic and acidic residues; it reads KSAERERRHKERERDKERDRNKKDRDRDKDGHRRDKDRKR. S107 and S109 each carry phosphoserine. Composition is skewed to basic and acidic residues over residues 112 to 137, 147 to 226, and 233 to 244; these read RGKD…DKKP, LLAK…RETN, and GRQKIREEKDKS. Residues 391–419 carry the Q motif motif; sequence RSWKDSSLPPHILEVIDKCGYKEPTPIQR. Residues 422–627 form the Helicase ATP-binding domain; the sequence is IPIGLQNRDI…RSYLRRPAVV (206 aa). ATP is bound at residue 435–442; the sequence is AETGSGKT. Residues 549–552 carry the DEAD box motif; the sequence is DEAD. In terms of domain architecture, Helicase C-terminal spans 651–799; that stretch reads KRKKLLAILE…SCPPELANHP (149 aa). Residues K686 and K811 each participate in a glycyl lysine isopeptide (Lys-Gly) (interchain with G-Cter in SUMO2) cross-link.

Belongs to the DEAD box helicase family. DDX23/PRP28 subfamily. The phosphorylated form (by SRPK2) is a component of the U4/U6-U5 tri-snRNP complex composed of the U4, U6 and U5 snRNAs and at least PRPF3, PRPF4, PRPF6, PRPF8, PRPF31, SNRNP200, TXNL4A, WDR57, SNRNP40, DDX23, CD2BP2, PPIH, SNU13, EFTUD2, SART1 and USP39. Identified in the spliceosome C complex. Interacts with ERBB4. Interacts with ERCC6. In vitro phosphorylated by CLK1 and U1 snRNP-associated protein kinase. Phosphorylated by SRPK2 and this phosphorylation is required for its association with the tri-snRNP (U4/U6-U5 tri-small nuclear ribonucleoproteins) and subsequent spliceosomal B complex formation. May be phosphorylated by SRPK2 on Ser residues in the SR domain; the phosphorylation is required for the removal of inappropriate R-loops during transcription.

The protein resides in the nucleus. It localises to the chromosome. It catalyses the reaction ATP + H2O = ADP + phosphate + H(+). In terms of biological role, involved in pre-mRNA splicing and its phosphorylated form (by SRPK2) is required for spliceosomal B complex formation. Independently of its spliceosome formation function, required for the suppression of incorrect R-loops formed during transcription; R-loops are composed of a DNA:RNA hybrid and the associated non-template single-stranded DNA. The protein is Probable ATP-dependent RNA helicase DDX23 of Pongo abelii (Sumatran orangutan).